Reading from the N-terminus, the 379-residue chain is Putative acetyl-CoA C-acetyltransferase VraB (379 aa).

Residue Cys-86 is the Acyl-thioester intermediate of the active site. The active-site Proton acceptor is His-338.

The protein belongs to the thiolase-like superfamily. Thiolase family.

The chain is Putative acetyl-CoA C-acetyltransferase VraB (vraB) from Staphylococcus aureus (strain MSSA476).